Here is a 379-residue protein sequence, read N- to C-terminus: Protein-glutamate methylesterase/protein-glutamine glutaminase (379 aa).

A Response regulatory domain is found at 4 to 121 (KILVVDDSIF…AANRQDAVAL (118 aa)). Asp-55 is modified (4-aspartylphosphate). The 194-residue stretch at 186 to 379 (SGKKYRCLAI…FESHILKEMA (194 aa)) folds into the CheB-type methylesterase domain. Active-site residues include Ser-198, His-225, and Asp-323.

Belongs to the CheB family. Phosphorylated by CheA. Phosphorylation of the N-terminal regulatory domain activates the methylesterase activity.

The protein localises to the cytoplasm. It carries out the reaction [protein]-L-glutamate 5-O-methyl ester + H2O = L-glutamyl-[protein] + methanol + H(+). It catalyses the reaction L-glutaminyl-[protein] + H2O = L-glutamyl-[protein] + NH4(+). Its function is as follows. Involved in chemotaxis. Part of a chemotaxis signal transduction system that modulates chemotaxis in response to various stimuli. Catalyzes the demethylation of specific methylglutamate residues introduced into the chemoreceptors (methyl-accepting chemotaxis proteins or MCP) by CheR. Also mediates the irreversible deamidation of specific glutamine residues to glutamic acid. In Pseudoalteromonas atlantica (strain T6c / ATCC BAA-1087), this protein is Protein-glutamate methylesterase/protein-glutamine glutaminase.